A 286-amino-acid chain; its full sequence is Alpha/beta-gliadin (286 aa).

The first 20 residues, 1 to 20, serve as a signal peptide directing secretion; that stretch reads MKTFLILVLLAIVATTATTA. The disordered stretch occupies residues 51-120; that stretch reads LGQQQPFPPQ…QQPISQQQQQ (70 aa). Positions 56 to 71 are enriched in pro residues; sequence PFPPQQPYPQPQPFPS. Positions 72–92 are enriched in low complexity; it reads QLPYLQLQPFPQPQLPYSQPQ. Residues 93–104 show a composition bias toward pro residues; the sequence is PFRPQQPYPQPQ. The segment covering 105-120 has biased composition (low complexity); the sequence is PQYSQPQQPISQQQQQ.

It belongs to the gliadin/glutenin family. Post-translationally, substrate of transglutaminase.

In terms of biological role, gliadin is the major seed storage protein in wheat. The sequence is that of Alpha/beta-gliadin from Triticum aestivum (Wheat).